We begin with the raw amino-acid sequence, 293 residues long: Formamidopyrimidine-DNA glycosylase (293 aa).

P2 (schiff-base intermediate with DNA) is an active-site residue. The Proton donor role is filled by E3. The active-site Proton donor; for beta-elimination activity is K58. DNA is bound by residues H104, R123, and K166. The segment at 257–293 adopts an FPG-type zinc-finger fold; that stretch reads QVYDREGEPCRTDGCGGVVKRFVQNGRSTFWCPKCQR. R283 (proton donor; for delta-elimination activity) is an active-site residue.

This sequence belongs to the FPG family. Monomer. Zn(2+) serves as cofactor.

It carries out the reaction Hydrolysis of DNA containing ring-opened 7-methylguanine residues, releasing 2,6-diamino-4-hydroxy-5-(N-methyl)formamidopyrimidine.. The catalysed reaction is 2'-deoxyribonucleotide-(2'-deoxyribose 5'-phosphate)-2'-deoxyribonucleotide-DNA = a 3'-end 2'-deoxyribonucleotide-(2,3-dehydro-2,3-deoxyribose 5'-phosphate)-DNA + a 5'-end 5'-phospho-2'-deoxyribonucleoside-DNA + H(+). Its function is as follows. Involved in base excision repair of DNA damaged by oxidation or by mutagenic agents. Acts as a DNA glycosylase that recognizes and removes damaged bases. Has a preference for oxidized purines, such as 7,8-dihydro-8-oxoguanine (8-oxoG). Has AP (apurinic/apyrimidinic) lyase activity and introduces nicks in the DNA strand. Cleaves the DNA backbone by beta-delta elimination to generate a single-strand break at the site of the removed base with both 3'- and 5'-phosphates. In Bradyrhizobium sp. (strain BTAi1 / ATCC BAA-1182), this protein is Formamidopyrimidine-DNA glycosylase.